The chain runs to 132 residues: Small ribosomal subunit protein uS8 (132 aa).

The protein belongs to the universal ribosomal protein uS8 family. Part of the 30S ribosomal subunit. Contacts proteins S5 and S12.

Functionally, one of the primary rRNA binding proteins, it binds directly to 16S rRNA central domain where it helps coordinate assembly of the platform of the 30S subunit. This is Small ribosomal subunit protein uS8 from Parvibaculum lavamentivorans (strain DS-1 / DSM 13023 / NCIMB 13966).